Consider the following 303-residue polypeptide: Probable 5-dehydro-4-deoxyglucarate dehydratase (303 aa).

The protein belongs to the DapA family.

The enzyme catalyses 5-dehydro-4-deoxy-D-glucarate + H(+) = 2,5-dioxopentanoate + CO2 + H2O. It functions in the pathway carbohydrate acid metabolism; D-glucarate degradation; 2,5-dioxopentanoate from D-glucarate: step 2/2. The polypeptide is Probable 5-dehydro-4-deoxyglucarate dehydratase (Delftia acidovorans (strain DSM 14801 / SPH-1)).